The following is a 420-amino-acid chain: Replication factor C large subunit (420 aa).

46 to 53 is a binding site for ATP; that stretch reads GVQGSGKT.

Belongs to the activator 1 small subunits family. RfcL subfamily. In terms of assembly, heteromultimer composed of small subunits (RfcS) and large subunits (RfcL).

Its function is as follows. Part of the RFC clamp loader complex which loads the PCNA sliding clamp onto DNA. This chain is Replication factor C large subunit, found in Thermoplasma volcanium (strain ATCC 51530 / DSM 4299 / JCM 9571 / NBRC 15438 / GSS1).